A 206-amino-acid chain; its full sequence is Large ribosomal subunit protein uL4 (206 aa).

Residues 47–77 (GTHDTKTRGEVSGGGRKPWRQKGTGRARHGS) form a disordered region. A compositionally biased stretch (basic residues) spans 63-77 (KPWRQKGTGRARHGS).

The protein belongs to the universal ribosomal protein uL4 family. As to quaternary structure, part of the 50S ribosomal subunit.

Its function is as follows. One of the primary rRNA binding proteins, this protein initially binds near the 5'-end of the 23S rRNA. It is important during the early stages of 50S assembly. It makes multiple contacts with different domains of the 23S rRNA in the assembled 50S subunit and ribosome. Forms part of the polypeptide exit tunnel. The chain is Large ribosomal subunit protein uL4 from Carboxydothermus hydrogenoformans (strain ATCC BAA-161 / DSM 6008 / Z-2901).